Here is a 392-residue protein sequence, read N- to C-terminus: GTPase Obg (392 aa).

Residues 1–159 (MKFVDEATIK…RELRLELLLL (159 aa)) form the Obg domain. The OBG-type G domain occupies 160-333 (ADVGMLGLPN…VCNELSDFMD (174 aa)). GTP is bound by residues 166–173 (GLPNAGKS), 191–195 (FTTLI), 213–216 (DIPG), 283–286 (NKTD), and 314–316 (AAV). Serine 173 and threonine 193 together coordinate Mg(2+). The segment at 364–392 (GKNVVTEDGDDDDDWDDEEDDGHVIYARD) is disordered. Over residues 370 to 384 (EDGDDDDDWDDEEDD) the composition is skewed to acidic residues.

It belongs to the TRAFAC class OBG-HflX-like GTPase superfamily. OBG GTPase family. In terms of assembly, monomer. The cofactor is Mg(2+).

Its subcellular location is the cytoplasm. In terms of biological role, an essential GTPase which binds GTP, GDP and possibly (p)ppGpp with moderate affinity, with high nucleotide exchange rates and a fairly low GTP hydrolysis rate. Plays a role in control of the cell cycle, stress response, ribosome biogenesis and in those bacteria that undergo differentiation, in morphogenesis control. The chain is GTPase Obg from Aliivibrio salmonicida (strain LFI1238) (Vibrio salmonicida (strain LFI1238)).